Reading from the N-terminus, the 839-residue chain is Sodium/hydrogen exchanger 3 (839 aa).

The first 32 residues, 1–32 (MPLGVRGTRREFRFPVWGLLLLALWMLPRALG), serve as a signal peptide directing secretion. Topologically, residues 33 to 56 (VEEIPGPDSHEKQGFQIVTFKWHH) are extracellular. Residues 57-79 (VQDPYIIALWILVASLAKIVFHL) form a helical membrane-spanning segment. Over 80–87 (SHKVTSVV) the chain is Cytoplasmic. A helical transmembrane segment spans residues 88–107 (PESALLIVLGLILGGIVWAA). Residues 108 to 116 (DHIASFTLT) are Extracellular-facing. The helical transmembrane segment at 117–134 (PTVFFFYLLPPIVLDAGY) threads the bilayer. Topologically, residues 135–137 (FMP) are cytoplasmic. Residues 138–173 (NRLFFGNLGTILLYAVIGTVWNAATTGLSLYGVYLS) traverse the membrane as a helical segment. Residues G143, G146, and T147 each coordinate a 1,2-diacyl-sn-glycero-3-phospho-(1D-myo-inositol). At 174 to 186 (GIMGDLSIGLLDF) the chain is on the extracellular side. Residues 187–208 (LLFGSLIAAVDPVAVLAVFEEV) traverse the membrane as a helical segment. Residues 209-210 (HV) lie on the Cytoplasmic side of the membrane. A helical transmembrane segment spans residues 211–242 (NDVLFIIVFGESLLNDAVTVVLYNVFDSFVSL). Over 243 to 249 (GADKVTG) the chain is Extracellular. A helical membrane pass occupies residues 250–284 (VDCVKGIVSFFVVSLGGTLIGIIFAFLLSLVTRFT). Residues 285 to 286 (KH) are Cytoplasmic-facing. The chain crosses the membrane as a helical span at residues 287–309 (VRIIEPGFVFIISYLSYLTSEML). Topologically, residues 310-311 (SL) are extracellular. The chain crosses the membrane as a helical span at residues 312–328 (SAILAITFCGICCQKYV). Over 329-335 (KANISEQ) the chain is Cytoplasmic. The chain crosses the membrane as a helical span at residues 336–364 (SATTVRYTMKMLASGAETIIFMFLGISAV). At 365 to 372 (DPAIWTWN) the chain is on the extracellular side. Residues 373–394 (TAFILLTLVFISVYRAIGVVLQ) form a helical membrane-spanning segment. The Cytoplasmic segment spans residues 395-407 (TWLLNKYRMVQLE). M403 is an a 1,2-diacyl-sn-glycero-3-phospho-(1D-myo-inositol) binding site. Residues 408–431 (IIDQVVMSYGGLRGAVAYALVVLL) traverse the membrane as a helical segment. The Extracellular segment spans residues 432–438 (DEKKVKE). A helical transmembrane segment spans residues 439–472 (KNLFVSTTIIVVFFTVIFQGLTIKPLVQWLKVKK). Residues 473-839 (SEHREPKLNE…RSFLPESTHM (367 aa)) are Cytoplasmic-facing. 3 residues coordinate a 1,2-diacyl-sn-glycero-3-phospho-(1D-myo-inositol): Q502, I503, and H505. A phosphoserine mark is found at S560 and S568. Positions 581–595 (RPSTVEASVSYLLRE) are interaction with EZR. The interval 596 to 673 (NVSTVCLDMQ…RKRLESFKST (78 aa)) is interaction with NHERF4. Residues 597–701 (VSTVCLDMQA…GQKRRNSSIP (105 aa)) form an interaction with AHCYL1 region. Residues S598 and S613 each carry the phosphoserine modification. Position 669 is a phosphoserine; by SGK1 (S669). Positions 688-697 (KRERGQKRRN) are enriched in basic residues. Positions 688 to 710 (KRERGQKRRNSSIPNGKIPMESP) are disordered. Residues S724, S815, and S818 each carry the phosphoserine modification.

Belongs to the monovalent cation:proton antiporter 1 (CPA1) transporter (TC 2.A.36) family. As to quaternary structure, homodimer. Found in the forms of complex and dynamic macromolecular complexes. Binds NHERF1 and NHERF2. Interacts with CHP1, CHP2 and SHANK2. Interacts with NHERF4 and interactions decrease in response to elevated calcium ion levels. Interacts with PDZK1 (via C-terminal PDZ domain). Interacts with AHCYL1; the interaction is required for SLC9A3 activity. Interacts with EZR; interaction targets SLC9A3 to the apical membrane. Interacts with SNX27 (via PDZ domains); directs SLC9A3 membrane insertion from early endosomes to the plasma membrane. Post-translationally, phosphorylated by PKA, which inhibits activity. Phosphorylation at Ser-669 by SGK1 is associated with increased abundance at the cell membrane.

The protein resides in the apical cell membrane. The protein localises to the cell membrane. It is found in the recycling endosome membrane. It localises to the early endosome membrane. It catalyses the reaction Na(+)(in) + H(+)(out) = Na(+)(out) + H(+)(in). With respect to regulation, seems to switch between active and inactive modes in response to various stimuli. Activated directly or indirectly by membrane phosphatidylinositol (PIs). Regulated by a variety of auxiliary proteins, which facilitate the maturation, cell surface expression and function of the transporter. Inhibited specifically by the drug tenapanor. In terms of biological role, plasma membrane Na(+)/H(+) antiporter. Exchanges intracellular H(+) ions for extracellular Na(+) in 1:1 stoichiometry, playing a key role in salt and fluid absorption and pH homeostasis. Major apical Na(+)/H(+) exchanger in kidney and intestine playing an important role in renal and intestine Na(+) absorption and blood pressure regulation. The sequence is that of Sodium/hydrogen exchanger 3 (SLC9A3) from Didelphis virginiana (North American opossum).